Consider the following 90-residue polypeptide: DNA-binding protein HU-alpha (90 aa).

This sequence belongs to the bacterial histone-like protein family. As to quaternary structure, heterodimer of an alpha and a beta chain.

Histone-like DNA-binding protein which is capable of wrapping DNA to stabilize it, and thus to prevent its denaturation under extreme environmental conditions. This Escherichia coli O157:H7 protein is DNA-binding protein HU-alpha (hupA).